The primary structure comprises 443 residues: Phosphoglucosamine mutase (443 aa).

The active-site Phosphoserine intermediate is the Ser102. Ser102, Asp241, Asp243, and Asp245 together coordinate Mg(2+). Ser102 is subject to Phosphoserine.

It belongs to the phosphohexose mutase family. The cofactor is Mg(2+). In terms of processing, activated by phosphorylation.

It catalyses the reaction alpha-D-glucosamine 1-phosphate = D-glucosamine 6-phosphate. Catalyzes the conversion of glucosamine-6-phosphate to glucosamine-1-phosphate. The polypeptide is Phosphoglucosamine mutase (Albidiferax ferrireducens (strain ATCC BAA-621 / DSM 15236 / T118) (Rhodoferax ferrireducens)).